The primary structure comprises 471 residues: Phosphatidylinositol 4-kinase type 2-alpha (471 aa).

Disordered stretches follow at residues 1-25 and 48-101; these read MDET…QCSP and PGSA…PDDP. The segment covering 90-101 has biased composition (basic and acidic residues); that stretch reads AERERNKFPDDP. Residues 117–445 form the PI3K/PI4K catalytic domain; that stretch reads DILPERISQG…VQTPPVIVET (329 aa). The interval 123–129 is G-loop; the sequence is ISQGSSG. ATP is bound by residues 124–130 and Lys-145; that span reads SQGSSGS. The important for substrate binding stretch occupies residues 150–152; it reads EPY. Residues 158–171 form an important for interaction with membranes region; the sequence is KWTKWLQKLCCPCC. 4 S-palmitoyl cysteine lipidation sites follow: Cys-167, Cys-168, Cys-170, and Cys-171. ATP is bound at residue 254–257; that stretch reads QLFV. The tract at residues 261–269 is important for interaction with membranes; it reads KDADYWLRR. The catalytic loop stretch occupies residues 298–306; the sequence is RNTDRGNDN. The segment at 336-356 is activation loop; it reads AIDNGLAFPLKHPDSWRAYPF. An ATP-binding site is contributed by Asp-338. The segment at 351-360 is important for interaction with membranes; that stretch reads WRAYPFYWAW.

The protein belongs to the PI3/PI4-kinase family. Type II PI4K subfamily.

The protein localises to the golgi apparatus. It is found in the trans-Golgi network membrane. Its subcellular location is the membrane raft. It localises to the endosome. The protein resides in the endosome membrane. The protein localises to the cytoplasmic vesicle. It is found in the cell projection. Its subcellular location is the dendrite. It localises to the presynaptic cell membrane. The protein resides in the synapse. The protein localises to the synaptosome. It is found in the mitochondrion. Its subcellular location is the membrane. It localises to the cell membrane. The protein resides in the perikaryon. The protein localises to the neuron projection. It carries out the reaction a 1,2-diacyl-sn-glycero-3-phospho-(1D-myo-inositol) + ATP = a 1,2-diacyl-sn-glycero-3-phospho-(1D-myo-inositol 4-phosphate) + ADP + H(+). Membrane-bound phosphatidylinositol-4 kinase (PI4-kinase) that catalyzes the phosphorylation of phosphatidylinositol (PI) to phosphatidylinositol 4-phosphate (PI4P), a lipid that plays important roles in endocytosis, Golgi function, protein sorting and membrane trafficking. Besides, phosphorylation of phosphatidylinositol (PI) to phosphatidylinositol 4-phosphate (PI4P) is the first committed step in the generation of phosphatidylinositol 4,5-bisphosphate (PIP2), a precursor of the second messenger inositol 1,4,5-trisphosphate (InsP3). The protein is Phosphatidylinositol 4-kinase type 2-alpha (pi4k2a) of Xenopus tropicalis (Western clawed frog).